A 1058-amino-acid chain; its full sequence is Carbamoyl phosphate synthase large chain (1058 aa).

The tract at residues 1-401 (MPKRTDIQKI…SLLKACRSLE (401 aa)) is carboxyphosphate synthetic domain. ATP-binding residues include Arg-129, Arg-169, Gly-175, Gly-176, Arg-208, Ile-210, Glu-215, Gly-241, Ile-242, His-243, Gln-284, and Glu-298. One can recognise an ATP-grasp 1 domain in the interval 133–327 (KQLMEELEQP…IAKLAAKIAV (195 aa)). Residues Gln-284, Glu-298, and Asn-300 each contribute to the Mg(2+) site. Gln-284, Glu-298, and Asn-300 together coordinate Mn(2+). The interval 402-546 (IGVHHNEIPE…YSTYGWENES (145 aa)) is oligomerization domain. Residues 547-929 (IRSDKESVLV…ALYKAFEASY (383 aa)) form a carbamoyl phosphate synthetic domain region. The ATP-grasp 2 domain maps to 671–861 (EQALKELDIP…MAQVATKLIL (191 aa)). 10 residues coordinate ATP: Arg-707, Ser-746, Ile-748, Glu-752, Gly-777, Val-778, His-779, Ser-780, Gln-820, and Glu-832. Residues Gln-820, Glu-832, and Asn-834 each coordinate Mg(2+). Mn(2+)-binding residues include Gln-820, Glu-832, and Asn-834. An MGS-like domain is found at 930–1058 (LHLPTFGNVV…ESRSFVTEAI (129 aa)). The allosteric domain stretch occupies residues 930–1058 (LHLPTFGNVV…ESRSFVTEAI (129 aa)).

This sequence belongs to the CarB family. As to quaternary structure, composed of two chains; the small (or glutamine) chain promotes the hydrolysis of glutamine to ammonia, which is used by the large (or ammonia) chain to synthesize carbamoyl phosphate. Tetramer of heterodimers (alpha,beta)4. The cofactor is Mg(2+). Mn(2+) is required as a cofactor.

The catalysed reaction is hydrogencarbonate + L-glutamine + 2 ATP + H2O = carbamoyl phosphate + L-glutamate + 2 ADP + phosphate + 2 H(+). It catalyses the reaction hydrogencarbonate + NH4(+) + 2 ATP = carbamoyl phosphate + 2 ADP + phosphate + 2 H(+). Its pathway is amino-acid biosynthesis; L-arginine biosynthesis; carbamoyl phosphate from bicarbonate: step 1/1. It participates in pyrimidine metabolism; UMP biosynthesis via de novo pathway; (S)-dihydroorotate from bicarbonate: step 1/3. Its function is as follows. Large subunit of the glutamine-dependent carbamoyl phosphate synthetase (CPSase). CPSase catalyzes the formation of carbamoyl phosphate from the ammonia moiety of glutamine, carbonate, and phosphate donated by ATP, constituting the first step of 2 biosynthetic pathways, one leading to arginine and/or urea and the other to pyrimidine nucleotides. The large subunit (synthetase) binds the substrates ammonia (free or transferred from glutamine from the small subunit), hydrogencarbonate and ATP and carries out an ATP-coupled ligase reaction, activating hydrogencarbonate by forming carboxy phosphate which reacts with ammonia to form carbamoyl phosphate. The polypeptide is Carbamoyl phosphate synthase large chain (Streptococcus pneumoniae (strain Hungary19A-6)).